The chain runs to 267 residues: Small ribosomal subunit protein uS2c (267 aa).

Residues 237–267 form a disordered region; it reads KQKIKKTGVKISGNRRTSSITKKRNPASSKI. The span at 250 to 267 shows a compositional bias: polar residues; sequence NRRTSSITKKRNPASSKI.

This sequence belongs to the universal ribosomal protein uS2 family.

It is found in the plastid. It localises to the chloroplast. The chain is Small ribosomal subunit protein uS2c (rps2) from Chlorella vulgaris (Green alga).